A 123-amino-acid polypeptide reads, in one-letter code: SPbeta prophage-derived uncharacterized protein YorE (123 aa).

This Bacillus subtilis (strain 168) protein is SPbeta prophage-derived uncharacterized protein YorE (yorE).